The sequence spans 100 residues: MKLSCLSLALAIILVLAIVYSPHMEVKALADAEPDAIGFADAFGEADAEPKRRRGLKKIIGKVIKGTGKVAGEAAASAVADAAVSAAIDAVVGTTEEPEQ.

A signal peptide spans 1-17 (MKLSCLSLALAIILVLA). The propeptide occupies 18-50 (IVYSPHMEVKALADAEPDAIGFADAFGEADAEP). O-linked (GalNAc...) serine glycosylation occurs at S85. O-linked (GalNAc...) threonine glycosylation is found at T94 and T95.

Belongs to the formicidae venom precursor-01 superfamily. Post-translationally, glycosylation is critical to maintaining the aqueous solubility of this protein, but does not directly contribute to its activity. As to expression, expressed by the venom gland.

The protein localises to the secreted. The protein resides in the target cell membrane. Functionally, neurotoxin that triggers pain behavior and inflammation in mammals, and is paralytic and lethal to insects. Causes a time-dependent increase in cell leak current. May act by targeting membranes. The polypeptide is U-myrmeciitoxin(01)-Mg7b (Myrmecia gulosa (Red bulldog ant)).